We begin with the raw amino-acid sequence, 304 residues long: Quinolinate synthase 1 (304 aa).

2 residues coordinate iminosuccinate: H24 and S41. C86 contributes to the [4Fe-4S] cluster binding site. Iminosuccinate-binding positions include 112–114 (YVN) and S129. A [4Fe-4S] cluster-binding site is contributed by C171. Iminosuccinate is bound by residues 197–199 (HPE) and T214. C259 lines the [4Fe-4S] cluster pocket.

The protein belongs to the quinolinate synthase family. Type 2 subfamily. [4Fe-4S] cluster serves as cofactor.

The protein resides in the cytoplasm. The catalysed reaction is iminosuccinate + dihydroxyacetone phosphate = quinolinate + phosphate + 2 H2O + H(+). Its pathway is cofactor biosynthesis; NAD(+) biosynthesis; quinolinate from iminoaspartate: step 1/1. In terms of biological role, catalyzes the condensation of iminoaspartate with dihydroxyacetone phosphate to form quinolinate. The protein is Quinolinate synthase 1 of Methanosarcina acetivorans (strain ATCC 35395 / DSM 2834 / JCM 12185 / C2A).